A 523-amino-acid chain; its full sequence is Bifunctional purine biosynthesis protein PurH (523 aa).

The MGS-like domain occupies 1 to 152; the sequence is MSTDDGRRPI…KNHPSAAVVT (152 aa).

The protein belongs to the PurH family.

It carries out the reaction (6R)-10-formyltetrahydrofolate + 5-amino-1-(5-phospho-beta-D-ribosyl)imidazole-4-carboxamide = 5-formamido-1-(5-phospho-D-ribosyl)imidazole-4-carboxamide + (6S)-5,6,7,8-tetrahydrofolate. It catalyses the reaction IMP + H2O = 5-formamido-1-(5-phospho-D-ribosyl)imidazole-4-carboxamide. It functions in the pathway purine metabolism; IMP biosynthesis via de novo pathway; 5-formamido-1-(5-phospho-D-ribosyl)imidazole-4-carboxamide from 5-amino-1-(5-phospho-D-ribosyl)imidazole-4-carboxamide (10-formyl THF route): step 1/1. Its pathway is purine metabolism; IMP biosynthesis via de novo pathway; IMP from 5-formamido-1-(5-phospho-D-ribosyl)imidazole-4-carboxamide: step 1/1. This Mycobacterium bovis (strain BCG / Pasteur 1173P2) protein is Bifunctional purine biosynthesis protein PurH.